Consider the following 131-residue polypeptide: Small ribosomal subunit protein uS11 (131 aa).

This sequence belongs to the universal ribosomal protein uS11 family. Part of the 30S ribosomal subunit. Interacts with proteins S7 and S18. Binds to IF-3.

Functionally, located on the platform of the 30S subunit, it bridges several disparate RNA helices of the 16S rRNA. Forms part of the Shine-Dalgarno cleft in the 70S ribosome. The chain is Small ribosomal subunit protein uS11 from Geobacter sulfurreducens (strain ATCC 51573 / DSM 12127 / PCA).